Here is a 583-residue protein sequence, read N- to C-terminus: Propane 2-monooxygenase operon transcriptional activator MimR (583 aa).

The region spanning 320-513 (LAGQSSSFRR…LRHVLTETVR (194 aa)) is the Sigma-54 factor interaction domain. Residues 349-356 (ERGSGRTY) and 395-404 (SADFAVIVSD) contribute to the ATP site.

Functionally, acts as a transcriptional activator of the mimABCD operon encoding the propane 2-monooxygenase complex. The polypeptide is Propane 2-monooxygenase operon transcriptional activator MimR (Mycolicibacterium smegmatis (strain ATCC 700084 / mc(2)155) (Mycobacterium smegmatis)).